We begin with the raw amino-acid sequence, 481 residues long: ATP synthase subunit beta, chloroplastic (481 aa).

162-169 provides a ligand contact to ATP; that stretch reads GGAGVGKT.

The protein belongs to the ATPase alpha/beta chains family. F-type ATPases have 2 components, CF(1) - the catalytic core - and CF(0) - the membrane proton channel. CF(1) has five subunits: alpha(3), beta(3), gamma(1), delta(1), epsilon(1). CF(0) has four main subunits: a(1), b(1), b'(1) and c(9-12).

It localises to the plastid. The protein localises to the chloroplast thylakoid membrane. It carries out the reaction ATP + H2O + 4 H(+)(in) = ADP + phosphate + 5 H(+)(out). In terms of biological role, produces ATP from ADP in the presence of a proton gradient across the membrane. The catalytic sites are hosted primarily by the beta subunits. The chain is ATP synthase subunit beta, chloroplastic from Chlorella vulgaris (Green alga).